The primary structure comprises 274 residues: Octanoyl-[GcvH]:protein N-octanoyltransferase (274 aa).

Positions 37–242 (QGNDAVVRTW…AMKTLGATLS (206 aa)) constitute a BPL/LPL catalytic domain. Residue cysteine 141 is the Acyl-thioester intermediate of the active site.

Belongs to the octanoyltransferase LipL family.

It carries out the reaction N(6)-octanoyl-L-lysyl-[glycine-cleavage complex H protein] + L-lysyl-[lipoyl-carrier protein] = N(6)-octanoyl-L-lysyl-[lipoyl-carrier protein] + L-lysyl-[glycine-cleavage complex H protein]. It functions in the pathway protein modification; protein lipoylation via endogenous pathway; protein N(6)-(lipoyl)lysine from octanoyl-[acyl-carrier-protein]. Catalyzes the amidotransfer (transamidation) of the octanoyl moiety from octanoyl-GcvH to the lipoyl domain of the E2 subunit of lipoate-dependent enzymes. This chain is Octanoyl-[GcvH]:protein N-octanoyltransferase, found in Macrococcus caseolyticus (strain JCSC5402) (Macrococcoides caseolyticum).